The following is a 392-amino-acid chain: Chorismate synthase (392 aa).

NADP(+)-binding residues include R40 and R46. FMN-binding positions include 135 to 137 (RAS), 256 to 257 (QA), G300, 315 to 319 (KPIAT), and R341.

Belongs to the chorismate synthase family. In terms of assembly, homotetramer. Requires FMNH2 as cofactor.

The catalysed reaction is 5-O-(1-carboxyvinyl)-3-phosphoshikimate = chorismate + phosphate. The protein operates within metabolic intermediate biosynthesis; chorismate biosynthesis; chorismate from D-erythrose 4-phosphate and phosphoenolpyruvate: step 7/7. Functionally, catalyzes the anti-1,4-elimination of the C-3 phosphate and the C-6 proR hydrogen from 5-enolpyruvylshikimate-3-phosphate (EPSP) to yield chorismate, which is the branch point compound that serves as the starting substrate for the three terminal pathways of aromatic amino acid biosynthesis. This reaction introduces a second double bond into the aromatic ring system. This Nocardioides sp. (strain ATCC BAA-499 / JS614) protein is Chorismate synthase.